Here is a 155-residue protein sequence, read N- to C-terminus: 3-hydroxyacyl-[acyl-carrier-protein] dehydratase FabZ (155 aa).

Residue H54 is part of the active site.

This sequence belongs to the thioester dehydratase family. FabZ subfamily.

It localises to the cytoplasm. It catalyses the reaction a (3R)-hydroxyacyl-[ACP] = a (2E)-enoyl-[ACP] + H2O. In terms of biological role, involved in unsaturated fatty acids biosynthesis. Catalyzes the dehydration of short chain beta-hydroxyacyl-ACPs and long chain saturated and unsaturated beta-hydroxyacyl-ACPs. The protein is 3-hydroxyacyl-[acyl-carrier-protein] dehydratase FabZ of Burkholderia lata (strain ATCC 17760 / DSM 23089 / LMG 22485 / NCIMB 9086 / R18194 / 383).